The following is a 498-amino-acid chain: Probable malate:quinone oxidoreductase (498 aa).

Belongs to the MQO family. It depends on FAD as a cofactor.

It catalyses the reaction (S)-malate + a quinone = a quinol + oxaloacetate. It participates in carbohydrate metabolism; tricarboxylic acid cycle; oxaloacetate from (S)-malate (quinone route): step 1/1. The chain is Probable malate:quinone oxidoreductase from Prochlorococcus marinus (strain MIT 9312).